We begin with the raw amino-acid sequence, 307 residues long: UDP-3-O-acyl-N-acetylglucosamine deacetylase (307 aa).

Residues histidine 79, histidine 239, and aspartate 243 each coordinate Zn(2+). Histidine 266 serves as the catalytic Proton donor.

It belongs to the LpxC family. It depends on Zn(2+) as a cofactor.

It carries out the reaction a UDP-3-O-[(3R)-3-hydroxyacyl]-N-acetyl-alpha-D-glucosamine + H2O = a UDP-3-O-[(3R)-3-hydroxyacyl]-alpha-D-glucosamine + acetate. Its pathway is glycolipid biosynthesis; lipid IV(A) biosynthesis; lipid IV(A) from (3R)-3-hydroxytetradecanoyl-[acyl-carrier-protein] and UDP-N-acetyl-alpha-D-glucosamine: step 2/6. Its function is as follows. Catalyzes the hydrolysis of UDP-3-O-myristoyl-N-acetylglucosamine to form UDP-3-O-myristoylglucosamine and acetate, the committed step in lipid A biosynthesis. In Tolumonas auensis (strain DSM 9187 / NBRC 110442 / TA 4), this protein is UDP-3-O-acyl-N-acetylglucosamine deacetylase.